Reading from the N-terminus, the 507-residue chain is Glycerol kinase 1 (507 aa).

Position 12 (threonine 12) interacts with ADP. Threonine 12, threonine 13, and serine 14 together coordinate ATP. Threonine 12 is a sn-glycerol 3-phosphate binding site. Arginine 16 contacts ADP. The sn-glycerol 3-phosphate site is built by arginine 82, glutamate 83, tyrosine 134, and aspartate 249. Glycerol contacts are provided by arginine 82, glutamate 83, tyrosine 134, aspartate 249, and glutamine 250. Threonine 271 and glycine 315 together coordinate ADP. Residues threonine 271, glycine 315, glutamine 319, and glycine 416 each coordinate ATP. ADP contacts are provided by glycine 416 and asparagine 420.

This sequence belongs to the FGGY kinase family.

The enzyme catalyses glycerol + ATP = sn-glycerol 3-phosphate + ADP + H(+). It functions in the pathway polyol metabolism; glycerol degradation via glycerol kinase pathway; sn-glycerol 3-phosphate from glycerol: step 1/1. Its activity is regulated as follows. Inhibited by fructose 1,6-bisphosphate (FBP). Its function is as follows. Key enzyme in the regulation of glycerol uptake and metabolism. Catalyzes the phosphorylation of glycerol to yield sn-glycerol 3-phosphate. The sequence is that of Glycerol kinase 1 from Streptomyces coelicolor (strain ATCC BAA-471 / A3(2) / M145).